The primary structure comprises 783 residues: uncharacterized protein (783 aa).

The segment at residues 40–66 (CFNCKARKVRCDGANPCKACASNNLEC) is a DNA-binding region (zn(2)-C6 fungal-type).

The protein resides in the cytoplasm. It localises to the nucleus. This is an uncharacterized protein from Schizosaccharomyces pombe (strain 972 / ATCC 24843) (Fission yeast).